Consider the following 130-residue polypeptide: Small ribosomal subunit protein uS8 (130 aa).

Belongs to the universal ribosomal protein uS8 family. Part of the 30S ribosomal subunit. Contacts proteins S5 and S12.

Functionally, one of the primary rRNA binding proteins, it binds directly to 16S rRNA central domain where it helps coordinate assembly of the platform of the 30S subunit. This is Small ribosomal subunit protein uS8 from Onion yellows phytoplasma (strain OY-M).